Consider the following 535-residue polypeptide: Probable fucosyltransferase 4 (535 aa).

Over 1 to 20 the chain is Cytoplasmic; the sequence is MYHIFQISGEVIKGLGLKTK. A helical; Signal-anchor for type II membrane protein transmembrane segment spans residues 21 to 41; that stretch reads ILITIVFSTLLILSVMLLSFS. Over 42-535 the chain is Lumenal; that stretch reads NNFNNKLFAA…IWGLKLFDEL (494 aa). Residues Asn136, Asn226, Asn230, Asn377, and Asn409 are each glycosylated (N-linked (GlcNAc...) asparagine).

This sequence belongs to the glycosyltransferase 37 family. In terms of tissue distribution, expressed in roots, stems, leaves, flowers, siliques and seedlings.

It is found in the golgi apparatus. The protein resides in the golgi stack membrane. Its pathway is protein modification; protein glycosylation. May be involved in cell wall biosynthesis. May act as a fucosyltransferase. This Arabidopsis thaliana (Mouse-ear cress) protein is Probable fucosyltransferase 4 (FUT4).